Here is a 589-residue protein sequence, read N- to C-terminus: Aspartate--tRNA ligase (589 aa).

Position 172 (glutamate 172) interacts with L-aspartate. Positions 196–199 are aspartate; the sequence is QLFK. Position 218 (arginine 218) interacts with L-aspartate. Residues 218 to 220 and glutamine 227 each bind ATP; that span reads RDE. Position 449 (histidine 449) interacts with L-aspartate. Glutamate 483 lines the ATP pocket. Residue arginine 490 coordinates L-aspartate. Position 535-538 (535-538) interacts with ATP; the sequence is GLDR.

Belongs to the class-II aminoacyl-tRNA synthetase family. Type 1 subfamily. As to quaternary structure, homodimer.

It is found in the cytoplasm. It catalyses the reaction tRNA(Asp) + L-aspartate + ATP = L-aspartyl-tRNA(Asp) + AMP + diphosphate. Functionally, catalyzes the attachment of L-aspartate to tRNA(Asp) in a two-step reaction: L-aspartate is first activated by ATP to form Asp-AMP and then transferred to the acceptor end of tRNA(Asp). This is Aspartate--tRNA ligase from Actinobacillus succinogenes (strain ATCC 55618 / DSM 22257 / CCUG 43843 / 130Z).